Consider the following 645-residue polypeptide: Protein LHY (645 aa).

S6 bears the Phosphoserine mark. Positions 19–73 (TITKQRERWTEDEHERFLEALRLYGRAWQRIEEHIGTKTAVQIRSHAQKFFTKLE) constitute an HTH myb-type domain. A DNA-binding region (H-T-H motif) is located at residues 46 to 69 (WQRIEEHIGTKTAVQIRSHAQKFF). Disordered stretches follow at residues 89–127 (IEIPPPRPKRKPNTPYPRKPGNNGTSSSQVSSAKDAKLV), 149–212 (EKTS…GTTV), 410–437 (QNLASKSPASSSDDSDETGVTKLNADSK), and 458–500 (AQKK…TDEN). Residues 110 to 120 (NNGTSSSQVSS) show a composition bias toward polar residues. The span at 149-158 (EKTSTGKENQ) shows a compositional bias: basic and acidic residues. Residues 159–169 (DENCSGVSTVN) are compositionally biased toward polar residues. The segment covering 197-207 (VPKKNKDKDGN) has biased composition (basic and acidic residues). The segment covering 468–478 (SCGSNTPSGSD) has biased composition (polar residues). A compositionally biased stretch (basic and acidic residues) spans 483–498 (ALDKMEKDKEDVKETD).

In terms of assembly, homodimer or heterodimer with CCA1. Interacts with CCA1 (via internal domain); independently of photoperiod. Functions probably as part of a large complex. Interacts with CKB1 and CKB3. Interacts with LNK1 and LNK2. In terms of processing, phosphorylated by CK2. Expressed in leaves, roots, stems, flowers and siliques.

It is found in the nucleus. Transcription factor involved in the circadian clock. Binds to the promoter region of APRR1/TOC1 and TCP21/CHE to repress their transcription. Represses both CCA1 and itself. May recognize the promoter of JMJ14 to regulates its expression during the night in a circadian manner. This chain is Protein LHY, found in Arabidopsis thaliana (Mouse-ear cress).